A 456-amino-acid chain; its full sequence is Decaprenyl-diphosphate synthase (456 aa).

The isopentenyl diphosphate site is built by K183, R186, and H216. Residues D223 and D227 each contribute to the Mg(2+) site. Position 233 (R233) interacts with isopentenyl diphosphate.

This sequence belongs to the FPP/GGPP synthase family. Mg(2+) serves as cofactor.

It localises to the mitochondrion. The enzyme catalyses 7 isopentenyl diphosphate + (2E,6E)-farnesyl diphosphate = all-trans-decaprenyl diphosphate + 7 diphosphate. It participates in cofactor biosynthesis; ubiquinone biosynthesis. Supplies decaprenyl diphosphate, the precursor for the side chain of the isoprenoid quinones ubiquinone-10. This is Decaprenyl-diphosphate synthase (coq1) from Dictyostelium discoideum (Social amoeba).